Here is a 289-residue protein sequence, read N- to C-terminus: Poly-beta-1,6-N-acetyl-D-glucosamine N-deacetylase (289 aa).

The N-terminal stretch at 1–30 is a signal peptide; the sequence is MKPFKLIFISALMILIMTNATPISHLNAQA. The region spanning 113 to 289 is the NodB homology domain; it reads RSVWINFDDM…KEWDGFDEEK (177 aa).

This sequence belongs to the polysaccharide deacetylase family.

The protein localises to the secreted. It is found in the cell wall. Functionally, catalyzes the N-deacetylation of poly-beta-1,6-N-acetyl-D-glucosamine (PNAG, also referred to as PIA), a biofilm adhesin polysaccharide. In fact, the IcaB deacetylase converts 15 to 20% of the GlcNAc residues of PNAG to glucosamine. N-deacetylation is crucial for attachment of the polysaccharide to the bacterial cell surface; it leads to the introduction of positive charges in the otherwise neutral PIA polymer, allowing electrostatic interactions. Deacetylation of the polymer is also essential for key virulence mechanisms of S.epidermidis, namely biofilm formation, colonization, and resistance to neutrophil phagocytosis and human antibacterial peptides. The protein is Poly-beta-1,6-N-acetyl-D-glucosamine N-deacetylase (icaB) of Staphylococcus epidermidis (strain ATCC 35984 / DSM 28319 / BCRC 17069 / CCUG 31568 / BM 3577 / RP62A).